We begin with the raw amino-acid sequence, 21 residues long: Trypsin (21 aa).

Positions 1-7 are cleaved as a propeptide — activation peptide; it reads FPIEEDK. Residues 8 to 21 form the Peptidase S1 domain; sequence IVGGYECPKHXVPW.

The protein belongs to the peptidase S1 family.

It localises to the secreted. It is found in the extracellular space. The enzyme catalyses Preferential cleavage: Arg-|-Xaa, Lys-|-Xaa.. This Protopterus aethiopicus (Marbled lungfish) protein is Trypsin.